Consider the following 264-residue polypeptide: NAD kinase 1 (264 aa).

Asp45 serves as the catalytic Proton acceptor. NAD(+) is bound by residues 45-46, 122-123, Arg148, Asp150, 161-166, and Ala185; these read DG, NE, and TAYNKS.

It belongs to the NAD kinase family. A divalent metal cation serves as cofactor.

It is found in the cytoplasm. It carries out the reaction NAD(+) + ATP = ADP + NADP(+) + H(+). Its function is as follows. Involved in the regulation of the intracellular balance of NAD and NADP, and is a key enzyme in the biosynthesis of NADP. Catalyzes specifically the phosphorylation on 2'-hydroxyl of the adenosine moiety of NAD to yield NADP. The polypeptide is NAD kinase 1 (Listeria innocua serovar 6a (strain ATCC BAA-680 / CLIP 11262)).